The primary structure comprises 297 residues: Protoheme IX farnesyltransferase 1 (297 aa).

Helical transmembrane passes span 23 to 43 (VVVL…RAGV), 45 to 65 (WSVL…AAVV), 93 to 113 (LPAL…LLAF), 117 to 137 (LTAW…TGFL), 145 to 165 (IVIG…AVSG), 171 to 191 (PLLL…ALAI), 216 to 236 (LHIL…YAIH), 241 to 261 (LYLA…WVLY), and 277 to 297 (IAYL…LLNL).

The protein belongs to the UbiA prenyltransferase family. Protoheme IX farnesyltransferase subfamily.

Its subcellular location is the cell inner membrane. The catalysed reaction is heme b + (2E,6E)-farnesyl diphosphate + H2O = Fe(II)-heme o + diphosphate. It functions in the pathway porphyrin-containing compound metabolism; heme O biosynthesis; heme O from protoheme: step 1/1. Its function is as follows. Converts heme B (protoheme IX) to heme O by substitution of the vinyl group on carbon 2 of heme B porphyrin ring with a hydroxyethyl farnesyl side group. The chain is Protoheme IX farnesyltransferase 1 from Pseudomonas putida (strain GB-1).